A 206-amino-acid chain; its full sequence is Ras-related protein Ral-A (206 aa).

Residue 21–28 (GSGGVGKS) participates in GTP binding. The Effector region motif lies at 43-51 (YEPTKADSY). GTP contacts are provided by residues 68–72 (DTAGQ) and 127–130 (NKSD). Serine 194 is subject to Phosphoserine. Position 203 is a cysteine methyl ester (cysteine 203). Residue cysteine 203 is the site of S-geranylgeranyl cysteine attachment. Positions 204–206 (CIL) are cleaved as a propeptide — removed in mature form.

It belongs to the small GTPase superfamily. Ras family. As to quaternary structure, interacts (via effector domain) with RALBP1; during mitosis, recruits RALBP1 to the mitochondrion where it promotes DNM1L phosphorylation and mitochondrial fission. Interacts with EXOC2/Sec5 and EXOC8/Exo84; binding to EXOC2 and EXOC8 is mutually exclusive. Interacts with Clostridium exoenzyme C3. Interacts with RALGPS1. Interacts with LPAR1 and LPAR2. Interacts with GRK2 in response to LPAR1 activation. RALA and GRK2 binding to LPAR1 is mutually exclusive. Interacts with CDC42. Prenylation is essential for membrane localization. In terms of processing, phosphorylated. Phosphorylation at Ser-194 by AURKA/Aurora kinase A, during mitosis, induces RALA localization to the mitochondrion where it regulates mitochondrial fission.

It is found in the cell membrane. Its subcellular location is the cleavage furrow. It localises to the midbody. The protein localises to the midbody ring. The protein resides in the mitochondrion. The catalysed reaction is GTP + H2O = GDP + phosphate + H(+). With respect to regulation, alternates between an inactive form bound to GDP and an active form bound to GTP. Activated by a guanine nucleotide-exchange factor (GEF) and inactivated by a GTPase-activating protein (GAP). Its function is as follows. Multifunctional GTPase involved in a variety of cellular processes including gene expression, cell migration, cell proliferation, oncogenic transformation and membrane trafficking. Accomplishes its multiple functions by interacting with distinct downstream effectors. Acts as a GTP sensor for GTP-dependent exocytosis of dense core vesicles. Key regulator of LPAR1 signaling and competes with GRK2 for binding to LPAR1 thus affecting the signaling properties of the receptor. Required for anchorage-independent proliferation of transformed cells. The RALA-exocyst complex regulates integrin-dependent membrane raft exocytosis and growth signaling. During mitosis, supports the stabilization and elongation of the intracellular bridge between dividing cells. Cooperates with EXOC2 to recruit other components of the exocyst to the early midbody. During mitosis, also controls mitochondrial fission by recruiting to the mitochondrion RALBP1, which mediates the phosphorylation and activation of DNM1L by the mitotic kinase cyclin B-CDK1. This Mus musculus (Mouse) protein is Ras-related protein Ral-A (Rala).